A 230-amino-acid polypeptide reads, in one-letter code: Thymidylate synthase 1 (230 aa).

Residue 92-93 coordinates dUMP; it reads RR. C112 serves as the catalytic Nucleophile. Residues 132 to 135, N143, and 173 to 175 each bind dUMP; these read RSND and HVY. D135 contributes to the (6R)-5,10-methylene-5,6,7,8-tetrahydrofolate binding site.

The protein belongs to the thymidylate synthase family. Bacterial-type ThyA subfamily. Homodimer.

Its subcellular location is the cytoplasm. It carries out the reaction dUMP + (6R)-5,10-methylene-5,6,7,8-tetrahydrofolate = 7,8-dihydrofolate + dTMP. Its pathway is pyrimidine metabolism; dTTP biosynthesis. In terms of biological role, catalyzes the reductive methylation of 2'-deoxyuridine-5'-monophosphate (dUMP) to 2'-deoxythymidine-5'-monophosphate (dTMP) while utilizing 5,10-methylenetetrahydrofolate (mTHF) as the methyl donor and reductant in the reaction, yielding dihydrofolate (DHF) as a by-product. This enzymatic reaction provides an intracellular de novo source of dTMP, an essential precursor for DNA biosynthesis. The protein is Thymidylate synthase 1 of Bacillus amyloliquefaciens (Bacillus velezensis).